A 413-amino-acid chain; its full sequence is Argininosuccinate synthase (413 aa).

22–30 contacts ATP; sequence AYSGGLDTS. L-citrulline is bound by residues Tyr-100 and Ser-105. Gly-130 lines the ATP pocket. Positions 132, 136, and 137 each coordinate L-aspartate. Position 136 (Asn-136) interacts with L-citrulline. L-citrulline is bound by residues Arg-140, Ser-189, Ser-198, Glu-274, and Tyr-286.

Belongs to the argininosuccinate synthase family. Type 1 subfamily. As to quaternary structure, homotetramer.

It is found in the cytoplasm. It carries out the reaction L-citrulline + L-aspartate + ATP = 2-(N(omega)-L-arginino)succinate + AMP + diphosphate + H(+). It participates in amino-acid biosynthesis; L-arginine biosynthesis; L-arginine from L-ornithine and carbamoyl phosphate: step 2/3. This chain is Argininosuccinate synthase, found in Endomicrobium trichonymphae.